Here is a 423-residue protein sequence, read N- to C-terminus: Glycine amidinotransferase, mitochondrial (423 aa).

A mitochondrion-targeting transit peptide spans 1–43; it reads MLRVRCLRGGSRGAEAVHYIGSRLGGSLTGWVQRTFQSTQAAT. Residues serine 46 and serine 49 each carry the phosphoserine modification. Aspartate 170 is an arginine binding site. Active-site residues include aspartate 254 and histidine 303. Residues aspartate 305, arginine 322, serine 354, and serine 355 each coordinate arginine. Position 385 is an N6-acetyllysine (lysine 385). Catalysis depends on cysteine 407, which acts as the Amidino-cysteine intermediate.

The protein belongs to the amidinotransferase family. In terms of assembly, homodimer. In terms of tissue distribution, highly expressed in the kidney and pancreas, especially in the proximal tubules of the kidney, and alpha cells of the pancreatic islets (at protein level). Moderately expressed in liver hepatocytes (at protein level). Expressed in the kidney, pancreas, liver, colon, ileum, jejunum, heart and skeletal muscle. In reproductive tissues, expressed in the testis, epididymis, ovary, oviduct and uterus. Expressed throughout the brain in neurons, astrocytes and oligodendrocytes. In 12.5 dpc embryos, it is expressed in the middle part of the somites, hepatic primordium and wall of the dorsal aorta. Expressed in 15.5 dpc embryos in isolated cells throughout the central nervous system, skeletal muscles, gonad primordia, caudal somites, liver and pancreas, but not in the choroid plexus, root ganglia or kidney. Expressed in skeletal muscle, kidney, pancreas, central nervous system, liver and intestine epithelial cells, but not in epidermis, dermis, olfactory epithelium, trachea, lung, stomach or heart in 18.5 dpc embryos.

The protein resides in the mitochondrion inner membrane. The catalysed reaction is L-arginine + glycine = guanidinoacetate + L-ornithine. It catalyses the reaction 4-aminobutanoate + L-arginine = 4-guanidinobutanoate + L-ornithine. The enzyme catalyses beta-alanine + L-arginine = 3-guanidinopropanoate + L-ornithine. It carries out the reaction taurine + L-arginine = taurocyamine + L-ornithine. Its pathway is amine and polyamine biosynthesis; creatine biosynthesis; creatine from L-arginine and glycine: step 1/2. Functionally, transamidinase that catalyzes the transfer of the amidino group of L-arginine onto the amino moiety of acceptor metabolites such as glycine, beta-alanine, gamma-aminobutyric acid (GABA) and taurine yielding the corresponding guanidine derivatives. Catalyzes the rate-limiting step of creatine biosynthesis, namely the transfer of the amidino group from L-arginine to glycine to generate guanidinoacetate, which is then methylated by GAMT to form creatine. Provides creatine as a source for ATP generation in tissues with high energy demands, in particular skeletal muscle, heart and brain. This chain is Glycine amidinotransferase, mitochondrial (Gatm), found in Rattus norvegicus (Rat).